Consider the following 222-residue polypeptide: Collectrin (222 aa).

Residues 1–14 form the signal peptide; that stretch reads MLWLLFFLVTAIHA. At 15–141 the chain is on the extracellular side; the sequence is DLCRPDAENA…LAPPTDPSVP (127 aa). Residues 21–222 form the Collectrin-like domain; that stretch reads AENAFKVRLS…VTEDERLTPL (202 aa). Asn76 and Asn93 each carry an N-linked (GlcNAc...) asparagine glycan. A helical transmembrane segment spans residues 142-162; that stretch reads IWIIIFGVIFCIVLVATMLLI. At 163-222 the chain is on the cytoplasmic side; it reads ISGIRQHRRKNKGPSEMEDSEDKCENVITIENGIPCDPLDMKGGHINDAFVTEDERLTPL. Thr214 and Thr220 each carry phosphothreonine.

This sequence belongs to the CLTRN family. Monomer. Homodimer; dimerization prevents CLTRN cleavage by BACE2. Interacts with SLC6A18; this interaction regulates the trafficking of SLC6A18 to the cell membrane and its amino acid transporter activity. Interacts with SLC6A19; this interaction regulates the trafficking of SLC6A19 to the cell membrane and its amino acid transporter activity. Interacts with SNAPIN. Post-translationally, glycosylated. Glycosylation is required for plasma membrane localization and for its cleavage by BACE2. In terms of processing, proteolytically processed in pancreatic beta cells by BACE2 leading to the generation and extracellular release of soluble CLTRN, and a corresponding cell-associated C-terminal fragment which is later cleaved by gamma-secretase. This shedding process inactivates CLTRN. Three cleavage sites have been identified for BACE2, two clustered sites after Phe-116 and Leu-118 and a more membrane proximal site at Phe-125; the preferred BACE2 cleavage site seems to be between Phe-125 and Leu-126, Phe-116 and Leu-118 act as alternative sites.

Its subcellular location is the cell membrane. Its function is as follows. Plays an important role in amino acid transport by acting as binding partner of amino acid transporters SLC6A18 and SLC6A19, regulating their trafficking on the cell surface and their activity. May also play a role in trafficking of amino acid transporters SLC3A1 and SLC7A9 to the renal cortical cell membrane. Regulator of SNARE complex function. Stimulator of beta cell replication. The chain is Collectrin (CLTRN) from Bos taurus (Bovine).